The primary structure comprises 242 residues: Methylthioribulose-1-phosphate dehydratase (242 aa).

Residues 1–22 (MAAASGHGLELANGGDATQDKL) form a disordered region. Cysteine 97 contacts substrate. 2 residues coordinate Zn(2+): histidine 115 and histidine 117. Glutamate 139 acts as the Proton donor/acceptor in catalysis. Histidine 195 lines the Zn(2+) pocket.

The protein belongs to the aldolase class II family. MtnB subfamily. It depends on Zn(2+) as a cofactor.

Its subcellular location is the cytoplasm. It carries out the reaction 5-(methylsulfanyl)-D-ribulose 1-phosphate = 5-methylsulfanyl-2,3-dioxopentyl phosphate + H2O. The protein operates within amino-acid biosynthesis; L-methionine biosynthesis via salvage pathway; L-methionine from S-methyl-5-thio-alpha-D-ribose 1-phosphate: step 2/6. Catalyzes the dehydration of methylthioribulose-1-phosphate (MTRu-1-P) into 2,3-diketo-5-methylthiopentyl-1-phosphate (DK-MTP-1-P). Functions in the methionine salvage pathway. May play a role in apoptosis. This chain is Methylthioribulose-1-phosphate dehydratase, found in Gallus gallus (Chicken).